Reading from the N-terminus, the 238-residue chain is Type III pantothenate kinase (238 aa).

Residue 7–14 (DAGNSGLK) coordinates ATP. Substrate-binding positions include Tyr-88 and 95–98 (GVDR). Asp-97 serves as the catalytic Proton acceptor. Asp-117 serves as a coordination point for K(+). Thr-120 is an ATP binding site. Thr-172 serves as a coordination point for substrate.

Belongs to the type III pantothenate kinase family. Homodimer. NH4(+) is required as a cofactor. It depends on K(+) as a cofactor.

The protein resides in the cytoplasm. The enzyme catalyses (R)-pantothenate + ATP = (R)-4'-phosphopantothenate + ADP + H(+). The protein operates within cofactor biosynthesis; coenzyme A biosynthesis; CoA from (R)-pantothenate: step 1/5. Its function is as follows. Catalyzes the phosphorylation of pantothenate (Pan), the first step in CoA biosynthesis. The chain is Type III pantothenate kinase from Hahella chejuensis (strain KCTC 2396).